A 409-amino-acid polypeptide reads, in one-letter code: MASGKTTGKTDAPAPVIKLGGPKPPKVGSSGNASWFQALKAKKLNSPPPKFEGSGVPDNENLKLSQQHGYWRRQARYKPGKGGKKSVPDAWYFYYTGTGPAADLNWGDSQDGIVWVSAKGADTKSRSNQGTRDPDKFDQYPLRFSDGGPDGNFRWDFIPINRGRSGRSTAASSAASSRAPSRDGSRGRRSGAEDDLIARAAKIIQDQQKKGSRITKAKADEMAHRRYCKRTIPPGYKVDQVFGPRTKGKEGNFGDDKMNEEGIKDGRVIAMLNLVPSSHACLFGSRVTPKLQPDGLHLRFEFTTVVSRDDPQFDNYVKICDQCVDGVGTRPKDDEPRPKSRPNSRPATRTSSPAPRQQRQKKEKKSKKQDDEVDKALTSDEERNNAQLEFDDEPKVINWGDSALGENEL.

Disordered regions lie at residues 1 to 32 (MASG…SSGN), 44 to 63 (LNSP…ENLK), 120 to 145 (GADT…LRFS), and 164 to 193 (RSGR…SGAE). The segment covering 15-31 (PVIKLGGPKPPKVGSSG) has biased composition (low complexity). Positions 29-160 (SSGNASWFQA…GNFRWDFIPI (132 aa)) are RNA-binding. One can recognise a CoV N NTD domain in the interval 31–156 (GNASWFQALK…GGPDGNFRWD (126 aa)). Residues 164 to 179 (RSGRSTAASSAASSRA) show a composition bias toward low complexity. Residues 180 to 192 (PSRDGSRGRRSGA) show a composition bias toward basic and acidic residues. Ser190 carries the phosphoserine; by host modification. One can recognise a CoV N CTD domain in the interval 215 to 331 (TKAKADEMAH…QCVDGVGTRP (117 aa)). The interval 226–333 (RYCKRTIPPG…VDGVGTRPKD (108 aa)) is dimerization. A disulfide bond links Cys320 and Cys323. Positions 326-409 (GVGTRPKDDE…GDSALGENEL (84 aa)) are disordered. Over residues 341–355 (RPNSRPATRTSSPAP) the composition is skewed to polar residues. The span at 358–367 (QRQKKEKKSK) shows a compositional bias: basic residues. Residues 368 to 384 (KQDDEVDKALTSDEERN) show a composition bias toward basic and acidic residues. Residue Thr378 is modified to Phosphothreonine; by host. Ser379 is subject to Phosphoserine; by host.

The protein belongs to the gammacoronavirus nucleocapsid protein family. As to quaternary structure, homooligomer. Both monomeric and oligomeric forms interact with RNA. Interacts with protein M. Interacts with NSP3; this interaction serves to tether the genome to the newly translated replicase-transcriptase complex at a very early stage of infection. Post-translationally, ADP-ribosylated. The ADP-ribosylation is retained in the virion during infection. In terms of processing, phosphorylated on serine and threonine residues.

It is found in the virion. The protein resides in the host endoplasmic reticulum-Golgi intermediate compartment. It localises to the host Golgi apparatus. Its function is as follows. Packages the positive strand viral genome RNA into a helical ribonucleocapsid (RNP) and plays a fundamental role during virion assembly through its interactions with the viral genome and membrane protein M. Plays an important role in enhancing the efficiency of subgenomic viral RNA transcription as well as viral replication. The sequence is that of Nucleoprotein from Avian infectious bronchitis virus (strain H120) (IBV).